A 329-amino-acid chain; its full sequence is uncharacterized protein (329 aa).

Positions 56–247 form a coiled coil; it reads LNKEEQFQED…EAEKTHQAKL (192 aa).

This is an uncharacterized protein from Bos taurus (Bovine).